We begin with the raw amino-acid sequence, 448 residues long: Bifunctional protein GlmU (448 aa).

Positions 1–232 (MTARSSLTIV…EDEVRGINTK (232 aa)) are pyrophosphorylase. Residues 11 to 14 (LAAG), Lys-25, Gln-78, and 83 to 84 (GT) each bind UDP-N-acetyl-alpha-D-glucosamine. Asp-108 contacts Mg(2+). 4 residues coordinate UDP-N-acetyl-alpha-D-glucosamine: Gly-144, Glu-158, Asn-173, and Asn-230. Position 230 (Asn-230) interacts with Mg(2+). Residues 233–253 (AQLAQAEAAMQARLRQAAMDA) are linker. An N-acetyltransferase region spans residues 254-448 (GVTLIAPETV…FRNAKLRQTK (195 aa)). Residues Arg-319 and Lys-337 each coordinate UDP-N-acetyl-alpha-D-glucosamine. His-349 acts as the Proton acceptor in catalysis. Residues Tyr-352 and Asn-363 each coordinate UDP-N-acetyl-alpha-D-glucosamine. Residues Ala-366, 372-373 (NY), Ser-409, and Arg-426 each bind acetyl-CoA. Residues 427-448 (SPQTTKEGAAARFRNAKLRQTK) are disordered.

This sequence in the N-terminal section; belongs to the N-acetylglucosamine-1-phosphate uridyltransferase family. In the C-terminal section; belongs to the transferase hexapeptide repeat family. In terms of assembly, homotrimer. The cofactor is Mg(2+).

It is found in the cytoplasm. It catalyses the reaction alpha-D-glucosamine 1-phosphate + acetyl-CoA = N-acetyl-alpha-D-glucosamine 1-phosphate + CoA + H(+). The catalysed reaction is N-acetyl-alpha-D-glucosamine 1-phosphate + UTP + H(+) = UDP-N-acetyl-alpha-D-glucosamine + diphosphate. The protein operates within nucleotide-sugar biosynthesis; UDP-N-acetyl-alpha-D-glucosamine biosynthesis; N-acetyl-alpha-D-glucosamine 1-phosphate from alpha-D-glucosamine 6-phosphate (route II): step 2/2. It participates in nucleotide-sugar biosynthesis; UDP-N-acetyl-alpha-D-glucosamine biosynthesis; UDP-N-acetyl-alpha-D-glucosamine from N-acetyl-alpha-D-glucosamine 1-phosphate: step 1/1. Its pathway is bacterial outer membrane biogenesis; LPS lipid A biosynthesis. Catalyzes the last two sequential reactions in the de novo biosynthetic pathway for UDP-N-acetylglucosamine (UDP-GlcNAc). The C-terminal domain catalyzes the transfer of acetyl group from acetyl coenzyme A to glucosamine-1-phosphate (GlcN-1-P) to produce N-acetylglucosamine-1-phosphate (GlcNAc-1-P), which is converted into UDP-GlcNAc by the transfer of uridine 5-monophosphate (from uridine 5-triphosphate), a reaction catalyzed by the N-terminal domain. The protein is Bifunctional protein GlmU of Bradyrhizobium sp. (strain ORS 278).